The sequence spans 147 residues: MNNILVINGPNLNLLGKREPDIYGNITLENINQKIKLHFKNEDLKIDFFQSNEEGKIIDKIIESEKKYNAIVINPAAYSHYSIAILDAMRSINIPVVEVHLSNIYKREEYRKKSVTAEASLGVISGFGYYGYIMAIEFILNNLVRER.

Tyr-23 acts as the Proton acceptor in catalysis. Residues Asn-74, His-80, and Asp-87 each contribute to the substrate site. His-100 functions as the Proton donor in the catalytic mechanism. Residues 101 to 102 and Arg-111 each bind substrate; that span reads LS.

Belongs to the type-II 3-dehydroquinase family. Homododecamer.

The enzyme catalyses 3-dehydroquinate = 3-dehydroshikimate + H2O. It participates in metabolic intermediate biosynthesis; chorismate biosynthesis; chorismate from D-erythrose 4-phosphate and phosphoenolpyruvate: step 3/7. Catalyzes a trans-dehydration via an enolate intermediate. The protein is 3-dehydroquinate dehydratase of Clostridium botulinum (strain ATCC 19397 / Type A).